Here is a 516-residue protein sequence, read N- to C-terminus: Arginyl-tRNA--protein transferase 1 (516 aa).

Basic and acidic residues predominate over residues 150-180 (IESEEKEKEKSIKKEGSKEFIHPQSIEEKLG). The tract at residues 150–206 (IESEEKEKEKSIKKEGSKEFIHPQSIEEKLGSGEPSHPIKVHIGPKPGKGADLSKPP) is disordered.

Belongs to the R-transferase family. Monomer. Interacts with LIAT1; LIAT1 is not a substrate of ATE1, the interaction takes place in the cytoplasm and seems to increase ATE1 arginyltransferase activity. In terms of assembly, interacts with LIAT1; has a higher affinity than the other isoforms. Widely expressed.

The protein resides in the nucleus. The protein localises to the cytoplasm. It catalyses the reaction an N-terminal L-alpha-aminoacyl-[protein] + L-arginyl-tRNA(Arg) = an N-terminal L-arginyl-L-aminoacyl-[protein] + tRNA(Arg) + H(+). Functionally, involved in the post-translational conjugation of arginine to the N-terminal aspartate or glutamate of a protein. This arginylation is required for degradation of the protein via the ubiquitin pathway. Does not arginylate cysteine residues. The polypeptide is Arginyl-tRNA--protein transferase 1 (Mus musculus (Mouse)).